A 339-amino-acid chain; its full sequence is DNA double-strand break repair nuclease NurA (339 aa).

Mn(2+) is bound by residues aspartate 58 and aspartate 133.

It belongs to the NurA family. Homodimer. Forms a complex with HerA. Mn(2+) is required as a cofactor.

Its activity is regulated as follows. Nuclease activity requires the presence of HerA. Another report shows endo- and exonuclease activity in the absence of HerA; HerA stimulates the exo- but not endonuclease. LhrC-Core (Hel112) inhibits the exonuclease activity of the HerA-NurA complex on ss- and dsDNA, has no effect on the nicking activity of NurA. Endo- and exonuclease activities are inhibited by ATP; ATP may subtract divalent ions from the reaction preventing nuclease activity, HerA can alleviate ATP inhibition. Its function is as follows. Involved in DNA double-strand break (DSB) repair. Probably acts with HerA to stimulate resection of the 5' strand and produce the long 3' single-strand that is required for RadA loading. NurA and HerA together stimulate the end-resection of six nucleotides of a linear DNA substrate. Processes linear double-stranded (ds)DNA probes with 3' or 5' single-stranded overhangs or blunt ends. Has endonuclease activity on single-stranded (ss)DNA and nicking activity on dsDNA without HerA as well as 5'- and 3'-exonuclease activity on ssDNA. Binds ssDNA, dsDNA, forked and bubble DNA equally well. The protein is DNA double-strand break repair nuclease NurA of Saccharolobus solfataricus (strain ATCC 35092 / DSM 1617 / JCM 11322 / P2) (Sulfolobus solfataricus).